We begin with the raw amino-acid sequence, 141 residues long: Hemoglobin subunit alpha-1/2 (141 aa).

Residues 1–141 (VLSPADKTNV…VSTVLTSKYR (141 aa)) form the Globin domain. Serine 3 is modified (phosphoserine). Lysine 7 is modified (N6-succinyllysine). The residue at position 8 (threonine 8) is a Phosphothreonine. Lysine 11 carries the post-translational modification N6-succinyllysine. Residue lysine 16 is modified to N6-acetyllysine; alternate. Lysine 16 carries the post-translational modification N6-succinyllysine; alternate. A Phosphotyrosine modification is found at tyrosine 24. Residue lysine 40 is modified to N6-succinyllysine. The residue at position 49 (serine 49) is a Phosphoserine. Histidine 58 contacts O2. Histidine 87 provides a ligand contact to heme b. Serine 102 is subject to Phosphoserine. The residue at position 108 (threonine 108) is a Phosphothreonine. Serine 124 is modified (phosphoserine). Phosphothreonine is present on residues threonine 134 and threonine 137. A Phosphoserine modification is found at serine 138.

This sequence belongs to the globin family. In terms of assembly, heterotetramer of two alpha chains and two beta chains. Red blood cells.

In terms of biological role, involved in oxygen transport from the lung to the various peripheral tissues. The polypeptide is Hemoglobin subunit alpha-1/2 (Leptonychotes weddellii (Weddell seal)).